The following is a 102-amino-acid chain: Urease subunit beta (102 aa).

This sequence belongs to the urease beta subunit family. In terms of assembly, heterotrimer of UreA (gamma), UreB (beta) and UreC (alpha) subunits. Three heterotrimers associate to form the active enzyme.

It is found in the cytoplasm. The catalysed reaction is urea + 2 H2O + H(+) = hydrogencarbonate + 2 NH4(+). The protein operates within nitrogen metabolism; urea degradation; CO(2) and NH(3) from urea (urease route): step 1/1. The protein is Urease subunit beta of Blochmanniella pennsylvanica (strain BPEN).